We begin with the raw amino-acid sequence, 665 residues long: Kinesin-like protein KIF22 (665 aa).

One can recognise a Kinesin motor domain in the interval 43–368 (RVRVAVRLRP…LNFAARSKEV (326 aa)). 127–134 (GPTGAGKT) lines the ATP pocket. The segment at 379–428 (QPHALGPVKLSQKELLGPPEAKRARGPEEEEIGSPEPMAAPASASQKLSP) is disordered. Residues Ser-412, Ser-427, and Ser-452 each carry the phosphoserine modification. Over residues 412–428 (SPEPMAAPASASQKLSP) the composition is skewed to low complexity. Lys-465 participates in a covalent cross-link: Glycyl lysine isopeptide (Lys-Gly) (interchain with G-Cter in SUMO2). A coiled-coil region spans residues 465–508 (KRERMVLMKTVEEKDLEIERLKTKQKELEAKMLAQKAEEKENHC). Phosphoserine is present on residues Ser-543, Ser-562, and Ser-581.

Belongs to the TRAFAC class myosin-kinesin ATPase superfamily. Kinesin family. As to quaternary structure, interacts with FAM83D. Interacts with SIAH1. In terms of processing, ubiquitinated; mediated by SIAH1 and leading to its subsequent proteasomal degradation. In terms of tissue distribution, expressed in bone, cartilage, joint capsule, ligament, skin, and primary cultured chondrocytes.

Its subcellular location is the nucleus. The protein localises to the cytoplasm. The protein resides in the cytoskeleton. Kinesin family member that is involved in spindle formation and the movements of chromosomes during mitosis and meiosis. Binds to microtubules and to DNA. Plays a role in congression of laterally attached chromosomes in NDC80-depleted cells. The polypeptide is Kinesin-like protein KIF22 (KIF22) (Homo sapiens (Human)).